Consider the following 165-residue polypeptide: MAKMTLSSYMLMLAFSLFSQGILLSASKSIRNLEDDIVFNTFRMGKAFQKEDTAERSVVAPSLEQYKNDESGFMNDDDNKNSKNTGSKQNLVTHGLPLSLAVKPYLALKGSVAFPAENGVQNAESTQEKREIGDEENSAKFPIGRRDFDMLRCMLGRVYRPCWQV.

A signal peptide spans 1 to 21 (MAKMTLSSYMLMLAFSLFSQG). A disordered region spans residues 66-89 (YKNDESGFMNDDDNKNSKNTGSKQ). Isoleucine 143 bears the Isoleucine amide mark. Cysteine 153 and cysteine 162 form a disulfide bridge.

Belongs to the MCH family. Pro-MCH is processed differentially in the brain and in peripheral organs producing two neuropeptides; NEI and MCH. A third peptide, NGE, may also be produced. Preferential processing in neurons by prohormone convertase 2 (PC2) generates NEI. MCH is generated in neurons of the lateral hypothalmic area by several prohormone convertases including PC1/3, PC2 and PC5/6. As to expression, predominantly expressed in hypothalamus. Also found in heart, intestine, spleen and testis (spermatogonia, early spermatocytes and Sertoli cells). In brain only mature MCH and NEI peptides are present. In peripheral tissues a large product, encompassing the NEI and MCH domains of the precursor, is found predominantly.

It localises to the secreted. In terms of biological role, MCH may act as a neurotransmitter or neuromodulator in a broad array of neuronal functions directed toward the regulation of goal-directed behavior, such as food intake, and general arousal. The chain is Pro-MCH (Pmch) from Mus musculus (Mouse).